The sequence spans 251 residues: Capsid protein (251 aa).

A Bipartite nuclear localization signal motif is present at residues 3 to 20 (KRDAPWRSMAGTSKVSRN). The short motif at 35 to 49 (KAAAWVNRPMYRKPR) is the Nuclear localization signal element. Residues 63–80 (CEGPCKVQSYEQRHDISH) fold into a zinc finger. The Nuclear export signal motif lies at 96-117 (ITHRVGKRFCVKSVYILGKIWM). The Bipartite nuclear localization signal motif lies at 195 to 242 (KRFWKVNNYVVYNHQEAGKYENHTENALLLYMACTHASNPVYATLKIR).

This sequence belongs to the geminiviridae capsid protein family. In terms of assembly, homomultimer. Binds to single-stranded and double-stranded viral DNA. Interacts (via nuclear localization signals) with host importin alpha-1a.

It localises to the virion. Its subcellular location is the host nucleus. Functionally, encapsidates the viral DNA into characteristic twinned ('geminate') particles. Binds the genomic viral ssDNA and shuttles it into and out of the cell nucleus. The CP of bipartite geminiviruses is not required for cell-to-cell or systemic movement. The sequence is that of Capsid protein from Cabbage leaf curl virus (isolate Jamaica) (CaLCuV).